The primary structure comprises 160 residues: MTKVERLLINYKTLEEFKKFKEYGIQELSMLEELQDNIIENDSTSPFYGIYFGDKLVARMSLYQVNGKSNPYFDNRQDYLELWKLEVLPGYQNRGYGRALVEFAKSFKMPIRTNPRMKSAEFWNKMNFKTVKYDMARDKGENPLIWHPDMDREMTPGESA.

The region spanning 7 to 151 (LLINYKTLEE…NPLIWHPDMD (145 aa)) is the N-acetyltransferase domain.

This is an uncharacterized protein from Bacillus subtilis (strain 168).